The sequence spans 322 residues: MSSKPQSIGVIGAPFSKGQPRGGVEEGPTVLRKAGLLEKLKELECDVKDYGDLSFADNLDDSPFQIVKNPRCVGKASEKLADVVAEVKKTGRISLVLGGDHSLAIGSISGHARVHPDLCVIWVDAHTDINTPLTTKTGNLHGQPVSFLLKELKEKMPEVPGFYWVAPCISAKDIVYIGLRDVDPGEHYILKTLGIKYFSMTEVDKLGIGKVMEETFSYLLGRKKRPIHLSFDVDGLDPSFTPATGTPVQGGLTYREGLYITEEIYKTGLLSGLDIMEVNPSLGKTPEEVTRTVNTTVAITMACFGVAREGNHKPIDYLSPPK.

The tract at residues Met-1–Gly-27 is disordered. Ser-7 carries the post-translational modification Phosphoserine. Position 17 is an N6-succinyllysine (Lys-17). Ser-62 is modified (phosphoserine). Residue Lys-75 is modified to N6-succinyllysine. Mn(2+) contacts are provided by His-101, Asp-124, His-126, and Asp-128. Residues His-126 to Asn-130, Thr-137 to Asn-139, and Asp-183 each bind substrate. Ser-217 carries the phosphoserine modification. Mn(2+)-binding residues include Asp-232 and Asp-234. The substrate site is built by Thr-246 and Glu-277.

It belongs to the arginase family. As to quaternary structure, homotrimer. Interacts with CMTM6. Mn(2+) serves as cofactor.

The protein localises to the cytoplasm. The enzyme catalyses L-arginine + H2O = urea + L-ornithine. Its pathway is nitrogen metabolism; urea cycle; L-ornithine and urea from L-arginine: step 1/1. The sequence is that of Arginase-1 (ARG1) from Bos taurus (Bovine).